We begin with the raw amino-acid sequence, 101 residues long: Biogenesis of lysosome-related organelles complex 1 subunit SNN1 (101 aa).

Residues 62–100 (DSNEYKAQFKEVNNLQKRLQKITLRLKDLERRSSQLTTS) adopt a coiled-coil conformation.

The protein belongs to the SNAPIN family. In terms of assembly, component of the biogenesis of lysosome-related organelles complex-1 (BLOC-1).

The protein resides in the endosome. In terms of biological role, component of the biogenesis of lysosome-related organelles complex-1 (BLOC-1), a complex involved in endosomal cargo sorting. The sequence is that of Biogenesis of lysosome-related organelles complex 1 subunit SNN1 (SNN1) from Candida glabrata (strain ATCC 2001 / BCRC 20586 / JCM 3761 / NBRC 0622 / NRRL Y-65 / CBS 138) (Yeast).